The primary structure comprises 368 residues: tRNA-specific 2-thiouridylase MnmA (368 aa).

Residues 10 to 17 and Met36 contribute to the ATP site; that span reads AMSGGIDS. The active-site Nucleophile is Cys106. Cysteines 106 and 203 form a disulfide. An ATP-binding site is contributed by Gly130. Residues 152-154 are interaction with tRNA; sequence KDQ. Residue Cys203 is the Cysteine persulfide intermediate of the active site. The interval 313–314 is interaction with tRNA; it reads RY.

The protein belongs to the MnmA/TRMU family.

The protein resides in the cytoplasm. It catalyses the reaction S-sulfanyl-L-cysteinyl-[protein] + uridine(34) in tRNA + AH2 + ATP = 2-thiouridine(34) in tRNA + L-cysteinyl-[protein] + A + AMP + diphosphate + H(+). Functionally, catalyzes the 2-thiolation of uridine at the wobble position (U34) of tRNA, leading to the formation of s(2)U34. The protein is tRNA-specific 2-thiouridylase MnmA of Cytophaga hutchinsonii (strain ATCC 33406 / DSM 1761 / CIP 103989 / NBRC 15051 / NCIMB 9469 / D465).